Consider the following 346-residue polypeptide: Hydroxymethylglutaryl-CoA synthase (346 aa).

A (3S)-3-hydroxy-3-methylglutaryl-CoA-binding site is contributed by Asp-28. Glu-80 (proton donor/acceptor) is an active-site residue. Positions 112 and 153 each coordinate (3S)-3-hydroxy-3-methylglutaryl-CoA. Cys-112 functions as the Acyl-thioester intermediate in the catalytic mechanism. Arg-199 contributes to the CoA binding site. Residues Thr-201 and His-234 each coordinate (3S)-3-hydroxy-3-methylglutaryl-CoA. The active-site Proton donor/acceptor is His-234. Residue Lys-239 participates in CoA binding. Arg-243, Asn-266, and Ser-296 together coordinate (3S)-3-hydroxy-3-methylglutaryl-CoA.

This sequence belongs to the thiolase-like superfamily. Archaeal HMG-CoA synthase family. In terms of assembly, interacts with acetoacetyl-CoA thiolase that catalyzes the precedent step in the pathway and with a DUF35 protein. The acetoacetyl-CoA thiolase/HMG-CoA synthase complex channels the intermediate via a fused CoA-binding site, which allows for efficient coupling of the endergonic thiolase reaction with the exergonic HMGCS reaction.

The catalysed reaction is acetoacetyl-CoA + acetyl-CoA + H2O = (3S)-3-hydroxy-3-methylglutaryl-CoA + CoA + H(+). The protein operates within metabolic intermediate biosynthesis; (R)-mevalonate biosynthesis; (R)-mevalonate from acetyl-CoA: step 2/3. In terms of biological role, catalyzes the condensation of acetyl-CoA with acetoacetyl-CoA to form 3-hydroxy-3-methylglutaryl-CoA (HMG-CoA). Functions in the mevalonate (MVA) pathway leading to isopentenyl diphosphate (IPP), a key precursor for the biosynthesis of isoprenoid compounds that are building blocks of archaeal membrane lipids. This Methanosphaera stadtmanae (strain ATCC 43021 / DSM 3091 / JCM 11832 / MCB-3) protein is Hydroxymethylglutaryl-CoA synthase.